A 196-amino-acid chain; its full sequence is Serine recombinase PinR (196 aa).

Residues 3 to 143 (RIFAYCRIST…SGIVRARGAG (141 aa)) form the Resolvase/invertase-type recombinase catalytic domain. The O-(5'-phospho-DNA)-serine intermediate role is filled by S11.

Belongs to the site-specific recombinase resolvase family.

The chain is Serine recombinase PinR (pinR) from Escherichia coli (strain K12).